Reading from the N-terminus, the 271-residue chain is Elongation factor Ts (271 aa).

Residues 76–79 (TDFV) are involved in Mg(2+) ion dislocation from EF-Tu.

Belongs to the EF-Ts family.

Its subcellular location is the cytoplasm. In terms of biological role, associates with the EF-Tu.GDP complex and induces the exchange of GDP to GTP. It remains bound to the aminoacyl-tRNA.EF-Tu.GTP complex up to the GTP hydrolysis stage on the ribosome. This Mycobacterium ulcerans (strain Agy99) protein is Elongation factor Ts.